Consider the following 183-residue polypeptide: ATP synthase subunit b, chloroplastic (183 aa).

Residues 27–49 form a helical membrane-spanning segment; that stretch reads LATNLINLTVVVGVLIFFGKGVL.

Belongs to the ATPase B chain family. F-type ATPases have 2 components, F(1) - the catalytic core - and F(0) - the membrane proton channel. F(1) has five subunits: alpha(3), beta(3), gamma(1), delta(1), epsilon(1). F(0) has four main subunits: a(1), b(1), b'(1) and c(10-14). The alpha and beta chains form an alternating ring which encloses part of the gamma chain. F(1) is attached to F(0) by a central stalk formed by the gamma and epsilon chains, while a peripheral stalk is formed by the delta, b and b' chains.

The protein localises to the plastid. Its subcellular location is the chloroplast thylakoid membrane. In terms of biological role, f(1)F(0) ATP synthase produces ATP from ADP in the presence of a proton or sodium gradient. F-type ATPases consist of two structural domains, F(1) containing the extramembraneous catalytic core and F(0) containing the membrane proton channel, linked together by a central stalk and a peripheral stalk. During catalysis, ATP synthesis in the catalytic domain of F(1) is coupled via a rotary mechanism of the central stalk subunits to proton translocation. Component of the F(0) channel, it forms part of the peripheral stalk, linking F(1) to F(0). The polypeptide is ATP synthase subunit b, chloroplastic (Brachypodium distachyon (Purple false brome)).